The primary structure comprises 111 residues: Phosphoribosyl-ATP pyrophosphatase (111 aa).

Belongs to the PRA-PH family.

It localises to the cytoplasm. It catalyses the reaction 1-(5-phospho-beta-D-ribosyl)-ATP + H2O = 1-(5-phospho-beta-D-ribosyl)-5'-AMP + diphosphate + H(+). Its pathway is amino-acid biosynthesis; L-histidine biosynthesis; L-histidine from 5-phospho-alpha-D-ribose 1-diphosphate: step 2/9. This chain is Phosphoribosyl-ATP pyrophosphatase (hisE), found in Pseudomonas aeruginosa (strain ATCC 15692 / DSM 22644 / CIP 104116 / JCM 14847 / LMG 12228 / 1C / PRS 101 / PAO1).